Reading from the N-terminus, the 602-residue chain is Multidrug and toxin extrusion protein 2 (602 aa).

Topologically, residues 1–33 (MDSLQDTVALDHGGCCPALSRLVPRGFGTEMWT) are cytoplasmic. Residues 34-54 (LFALSGPLFLFQVLTFMIYIV) form a helical membrane-spanning segment. Topologically, residues 55–66 (STVFCGHLGKVE) are extracellular. Residues 67 to 87 (LASVTLAVAFVNVCGVSVGVG) traverse the membrane as a helical segment. Residues 88-119 (LSSACDTLMSQSFGSPNKKHVGVILQRGALVL) are Cytoplasmic-facing. Residues 120–140 (LLCCLPCWALFLNTQHILLLF) form a helical membrane-spanning segment. The Extracellular segment spans residues 141-153 (RQDPDVSRLTQDY). The chain crosses the membrane as a helical span at residues 154-174 (VMIFIPGLPVIFLYNLLAKYL). Residues 175–219 (QNQGWLKGQEEESPFQTPGLSILHPSHSHLSRASFHLFQKITWPQ) are Cytoplasmic-facing. A helical membrane pass occupies residues 220-240 (VLSGVVGNCVNGVANYALVSV). Residues 241-248 (LNLGVRGS) are Extracellular-facing. The helical transmembrane segment at 249-269 (AYANIISQFAQTVFLLLYIVL) threads the bilayer. Topologically, residues 270-289 (KKLHLETWAGWSSQCLQDWG) are cytoplasmic. Residues 290–309 (PFFSLAVPSMLMICVEWWAY) form a helical membrane-spanning segment. Residues 310-327 (EIGSFLMGLLSVVDLSAQ) lie on the Extracellular side of the membrane. A helical membrane pass occupies residues 328-348 (AVIYEVATVTYMIPLGLSIGV). Topologically, residues 349–368 (CVRVGMALGAADTVQAKRSA) are cytoplasmic. The helical transmembrane segment at 369–389 (VSGVLSIVGISLVLGTLISIL) threads the bilayer. Residues 390 to 402 (KNQLGHIFTNDED) are Extracellular-facing. A helical membrane pass occupies residues 403–423 (VIALVSQVLPVYSVFHVFEAI). Residues 424–442 (CCVYGGVLRGTGKQAFGAA) lie on the Cytoplasmic side of the membrane. Residues 443-463 (VNAITYYIIGLPLGILLTFVV) traverse the membrane as a helical segment. Topologically, residues 464-466 (RMR) are extracellular. Residues 467–487 (IMGLWLGMLACVFLATAAFVA) traverse the membrane as a helical segment. Residues 488 to 578 (YTARLDWKLA…LSVKQLVIRR (91 aa)) are Cytoplasmic-facing. The disordered stretch occupies residues 503–529 (KHSGRQQQQRAESTATRPGPEKAVLSS). A compositionally biased stretch (polar residues) spans 507–518 (RQQQQRAESTAT). The chain crosses the membrane as a helical span at residues 579 to 599 (GAALGAASATLMVGLTVRILA). Topologically, residues 600 to 602 (TRH) are extracellular.

It belongs to the multi antimicrobial extrusion (MATE) (TC 2.A.66.1) family. High expression in kidney. Very small expression in adrenal gland and lung. As to expression, high expression in kidney. Very small expression in brain and testis. In terms of tissue distribution, ubiquitously expressed in all tissues examined except the kidney.

The protein localises to the cell membrane. It localises to the apical cell membrane. It carries out the reaction thiamine(out) + H(+)(in) = thiamine(in) + H(+)(out). The catalysed reaction is estrone 3-sulfate(in) + H(+)(out) = estrone 3-sulfate(out) + H(+)(in). The enzyme catalyses creatinine(in) + H(+)(out) = creatinine(out) + H(+)(in). In terms of biological role, multidrug efflux pump that functions as a H(+)/organic cation antiporter. Mediates the efflux of cationic compounds, such as the model cations, tetraethylammonium (TEA) and 1-methyl-4-phenylpyridinium (MPP+), the platinum-based drug oxaliplatin or weak bases that are positively charged at physiological pH, cimetidine, the platinum-based drugs cisplatin and oxaliplatin or the antidiabetic drug metformin. Mediates the efflux of endogenous compounds such as, creatinine, thiamine and estrone-3-sulfate. Plays a physiological role in the excretion of drugs, toxins and endogenous metabolites through the kidney. Its function is as follows. Non-functional protein. The polypeptide is Multidrug and toxin extrusion protein 2 (Homo sapiens (Human)).